The sequence spans 81 residues: Photosystem I iron-sulfur center (81 aa).

4Fe-4S ferredoxin-type domains lie at 2-31 and 39-68; these read SHAV…MVPW and IASA…VRVY. Residues Cys-11, Cys-14, Cys-17, Cys-21, Cys-48, Cys-51, Cys-54, and Cys-58 each contribute to the [4Fe-4S] cluster site.

In terms of assembly, the eukaryotic PSI reaction center is composed of at least 11 subunits. [4Fe-4S] cluster serves as cofactor.

The protein resides in the plastid. It is found in the chloroplast thylakoid membrane. The catalysed reaction is reduced [plastocyanin] + hnu + oxidized [2Fe-2S]-[ferredoxin] = oxidized [plastocyanin] + reduced [2Fe-2S]-[ferredoxin]. Its function is as follows. Apoprotein for the two 4Fe-4S centers FA and FB of photosystem I (PSI); essential for photochemical activity. FB is the terminal electron acceptor of PSI, donating electrons to ferredoxin. The C-terminus interacts with PsaA/B/D and helps assemble the protein into the PSI complex. Required for binding of PsaD and PsaE to PSI. PSI is a plastocyanin/cytochrome c6-ferredoxin oxidoreductase, converting photonic excitation into a charge separation, which transfers an electron from the donor P700 chlorophyll pair to the spectroscopically characterized acceptors A0, A1, FX, FA and FB in turn. The chain is Photosystem I iron-sulfur center from Ostreococcus tauri.